A 107-amino-acid chain; its full sequence is uncharacterized protein (107 aa).

This is an uncharacterized protein from Microplitis demolitor (Parasitoid wasp).